The sequence spans 293 residues: ATP synthase gamma chain (293 aa).

This sequence belongs to the ATPase gamma chain family. F-type ATPases have 2 components, CF(1) - the catalytic core - and CF(0) - the membrane proton channel. CF(1) has five subunits: alpha(3), beta(3), gamma(1), delta(1), epsilon(1). CF(0) has three main subunits: a, b and c.

The protein resides in the cell inner membrane. Functionally, produces ATP from ADP in the presence of a proton gradient across the membrane. The gamma chain is believed to be important in regulating ATPase activity and the flow of protons through the CF(0) complex. The polypeptide is ATP synthase gamma chain (Sinorhizobium fredii (strain NBRC 101917 / NGR234)).